Reading from the N-terminus, the 187-residue chain is HTH-type transcriptional repressor Rv1474c (187 aa).

Positions alanine 10–methionine 70 constitute an HTH tetR-type domain. Residues threonine 33 to phenylalanine 52 constitute a DNA-binding region (H-T-H motif).

As to quaternary structure, homodimer.

Its activity is regulated as follows. Binding to DNA is abolished in the presence of high concentration of iron. Specifically binds to tetracycline, which leads to a conformational change in the structure of the protein and inhibits the DNA binding activity. Functionally, represses the expression of the aconitase gene acn and its own expression, in an iron-responsive manner. Binds to the inverted repeat element present in the upstream region of acn (Rv1475c)-Rv1474c operon. Preferentially binds to major groove of the DNA. The polypeptide is HTH-type transcriptional repressor Rv1474c (Mycobacterium tuberculosis (strain ATCC 25618 / H37Rv)).